The primary structure comprises 222 residues: 26S proteasome non-ATPase regulatory subunit 9 (222 aa).

The PDZ domain occupies 108 to 194 (QARDMAEARE…KPLNVTVIRR (87 aa)). At S128 the chain carries Phosphoserine.

The protein belongs to the proteasome subunit p27 family. As to quaternary structure, interacts with PSMC3. Part of a transient complex (modulator) containing PSMD9, PSMC6 and PSMC3 formed during the assembly of the 26S proteasome.

Acts as a chaperone during the assembly of the 26S proteasome, specifically of the base subcomplex of the PA700/19S regulatory complex (RC). During the base subcomplex assembly is part of an intermediate PSMD9:PSMC6:PSMC3 module, also known as modulator trimer complex; PSMD9 is released during the further base assembly process. The polypeptide is 26S proteasome non-ATPase regulatory subunit 9 (Psmd9) (Mus musculus (Mouse)).